A 396-amino-acid polypeptide reads, in one-letter code: Elongation factor Tu (396 aa).

Residues 10–206 (KPHVNVGTIG…TMDSYIPEPV (197 aa)) enclose the tr-type G domain. The G1 stretch occupies residues 19–26 (GHVDHGKT). 19 to 26 (GHVDHGKT) lines the GTP pocket. Residue Thr26 participates in Mg(2+) binding. The interval 60 to 64 (GITIS) is G2. A G3 region spans residues 81–84 (DCPG). GTP-binding positions include 81–85 (DCPGH) and 136–139 (NKAD). Residues 136-139 (NKAD) form a G4 region. The tract at residues 174–176 (SAL) is G5.

The protein belongs to the TRAFAC class translation factor GTPase superfamily. Classic translation factor GTPase family. EF-Tu/EF-1A subfamily. In terms of assembly, monomer.

It is found in the cytoplasm. The enzyme catalyses GTP + H2O = GDP + phosphate + H(+). In terms of biological role, GTP hydrolase that promotes the GTP-dependent binding of aminoacyl-tRNA to the A-site of ribosomes during protein biosynthesis. This chain is Elongation factor Tu, found in Legionella pneumophila (strain Paris).